The chain runs to 237 residues: Ribonuclease PH (237 aa).

Phosphate is bound by residues Arg86 and 124–126; that span reads GTR.

The protein belongs to the RNase PH family. As to quaternary structure, homohexameric ring arranged as a trimer of dimers.

It carries out the reaction tRNA(n+1) + phosphate = tRNA(n) + a ribonucleoside 5'-diphosphate. Functionally, phosphorolytic 3'-5' exoribonuclease that plays an important role in tRNA 3'-end maturation. Removes nucleotide residues following the 3'-CCA terminus of tRNAs; can also add nucleotides to the ends of RNA molecules by using nucleoside diphosphates as substrates, but this may not be physiologically important. Probably plays a role in initiation of 16S rRNA degradation (leading to ribosome degradation) during starvation. The sequence is that of Ribonuclease PH from Roseobacter denitrificans (strain ATCC 33942 / OCh 114) (Erythrobacter sp. (strain OCh 114)).